Consider the following 381-residue polypeptide: tRNA N6-adenosine threonylcarbamoyltransferase (381 aa).

2 residues coordinate Fe cation: histidine 114 and histidine 118. Substrate-binding positions include 142–146 (VVSGG), aspartate 178, glycine 191, aspartate 195, and asparagine 321. Aspartate 349 is a binding site for Fe cation.

This sequence belongs to the KAE1 / TsaD family. It depends on Fe(2+) as a cofactor.

It localises to the cytoplasm. The enzyme catalyses L-threonylcarbamoyladenylate + adenosine(37) in tRNA = N(6)-L-threonylcarbamoyladenosine(37) in tRNA + AMP + H(+). Functionally, required for the formation of a threonylcarbamoyl group on adenosine at position 37 (t(6)A37) in tRNAs that read codons beginning with adenine. Is involved in the transfer of the threonylcarbamoyl moiety of threonylcarbamoyl-AMP (TC-AMP) to the N6 group of A37, together with TsaE and TsaB. TsaD likely plays a direct catalytic role in this reaction. The chain is tRNA N6-adenosine threonylcarbamoyltransferase from Koribacter versatilis (strain Ellin345).